We begin with the raw amino-acid sequence, 664 residues long: ATP synthase subunit alpha 2 (664 aa).

Residue G180 to T187 coordinates ATP. Residues M525–R664 are disordered. Basic and acidic residues predominate over residues A543–A588. The span at A589–P599 shows a compositional bias: low complexity. The span at A621–A639 shows a compositional bias: basic and acidic residues.

This sequence belongs to the ATPase alpha/beta chains family. F-type ATPases have 2 components, CF(1) - the catalytic core - and CF(0) - the membrane proton channel. CF(1) has five subunits: alpha(3), beta(3), gamma(1), delta(1), epsilon(1). CF(0) has three main subunits: a(1), b(2) and c(9-12). The alpha and beta chains form an alternating ring which encloses part of the gamma chain. CF(1) is attached to CF(0) by a central stalk formed by the gamma and epsilon chains, while a peripheral stalk is formed by the delta and b chains.

Its subcellular location is the cell inner membrane. The enzyme catalyses ATP + H2O + 4 H(+)(in) = ADP + phosphate + 5 H(+)(out). Functionally, produces ATP from ADP in the presence of a proton gradient across the membrane. The alpha chain is a regulatory subunit. The chain is ATP synthase subunit alpha 2 from Burkholderia pseudomallei (strain 1710b).